An 855-amino-acid chain; its full sequence is Spindle and centriole-associated protein 1 (855 aa).

Positions 164-200 (QALNDVDGEEEGTVTSQSGESENENELDNSLNSQSNT) are disordered. Residue Thr235 is modified to Phosphothreonine. Residues 300-311 (KPNLHALSKPKK) are compositionally biased toward basic residues. The segment at 300–328 (KPNLHALSKPKKNMLSGSTTSADLPNRTN) is disordered. Polar residues predominate over residues 314–328 (LSGSTTSADLPNRTN). The stretch at 325 to 437 (NRTNSNLDVL…TQARLRQYMV (113 aa)) forms a coiled coil. 2 positions are modified to phosphoserine: Ser640 and Ser644. The stretch at 725 to 751 (GSMEERIAELNRQSMEARGKLLQLIEQ) forms a coiled coil. 3 positions are modified to phosphoserine: Ser760, Ser764, and Ser819. A disordered region spans residues 789 to 834 (EAPESSKCSTVSPVSEINTRRSSGATSNSCSPLNATSGSGRFTPLN). Residues 794–828 (SKCSTVSPVSEINTRRSSGATSNSCSPLNATSGSG) are compositionally biased toward polar residues.

As to quaternary structure, interacts with CEP120.

The protein resides in the cytoplasm. Its subcellular location is the cytoskeleton. It localises to the microtubule organizing center. It is found in the centrosome. The protein localises to the centriole. The protein resides in the spindle. Regulator required for centriole duplication, for proper bipolar spindle formation and chromosome congression in mitosis. The chain is Spindle and centriole-associated protein 1 (SPICE1) from Pongo abelii (Sumatran orangutan).